The chain runs to 254 residues: Translation initiation factor 2 subunit alpha (254 aa).

In terms of domain architecture, S1 motif spans 10-81 (GDLVVVKITE…ERKVVDLSLK (72 aa)).

This sequence belongs to the eIF-2-alpha family. Heterotrimer composed of an alpha, a beta and a gamma chain.

EIF-2 functions in the early steps of protein synthesis by forming a ternary complex with GTP and initiator tRNA. This Thermoplasma acidophilum (strain ATCC 25905 / DSM 1728 / JCM 9062 / NBRC 15155 / AMRC-C165) protein is Translation initiation factor 2 subunit alpha.